The sequence spans 381 residues: N-acetyldiaminopimelate deacetylase (381 aa).

Residue Asp-71 is part of the active site. Glu-130 (proton acceptor) is an active-site residue.

It belongs to the peptidase M20A family. N-acetyldiaminopimelate deacetylase subfamily.

It catalyses the reaction N-acetyl-(2S,6S)-2,6-diaminopimelate + H2O = (2S,6S)-2,6-diaminopimelate + acetate. It participates in amino-acid biosynthesis; L-lysine biosynthesis via DAP pathway; LL-2,6-diaminopimelate from (S)-tetrahydrodipicolinate (acetylase route): step 3/3. Its function is as follows. Catalyzes the conversion of N-acetyl-diaminopimelate to diaminopimelate and acetate. This Ligilactobacillus salivarius (strain UCC118) (Lactobacillus salivarius) protein is N-acetyldiaminopimelate deacetylase.